A 30-amino-acid polypeptide reads, in one-letter code: Elongation factor 1-delta (30 aa).

Belongs to the EF-1-beta/EF-1-delta family. EF-1 is composed of 4 subunits: alpha, beta (1B-alpha=beta'), delta (1B-beta), and gamma (1B-gamma).

Functionally, EF-1-beta and EF-1-delta stimulate the exchange of GDP bound to EF-1-alpha to GTP. This Populus euphratica (Euphrates poplar) protein is Elongation factor 1-delta.